Here is a 390-residue protein sequence, read N- to C-terminus: Transforming growth factor beta-1 proprotein (390 aa).

Positions 1 to 29 (MPPSGLRLLPLLLPLLWLLVLTPGRPAAG) are cleaved as a signal peptide. Positions 30 to 74 (LSTCKTIDMELVKRKRIEAIRGQILSKLRLASPPSQGEVPPGPLP) are straightjacket domain. The segment at 75 to 271 (EAVLALYNST…ATPLERAQHL (197 aa)) is arm domain. N-linked (GlcNAc...) asparagine glycosylation is found at N82, N136, and N176. The segment at 226 to 252 (DSRDNTLQVDINGLSSSRRGDLATIHG) is bowtie tail. The Cell attachment site motif lies at 244-246 (RGD). Intrachain disulfides connect C285–C294, C293–C356, C322–C387, and C326–C389.

The protein belongs to the TGF-beta family. As to quaternary structure, homodimer; disulfide-linked. Interacts with the serine proteases, HTRA1 and HTRA3: the interaction with either inhibits TGFB1-mediated signaling and the HTRA protease activity is required for this inhibition. May interact with THSD4; this interaction may lead to sequestration by FBN1 microfibril assembly and attenuation of TGFB signaling. Interacts with CD109, DPT and ASPN. Interacts with EFEMP2. Interacts with TSKU; the interaction contributes to regulation of the hair cycle. Interacts with TGFBR3. Homodimer; disulfide-linked. Interacts with transforming growth factor beta-1 (TGF-beta-1) chain; interaction is non-covalent and maintains TGF-beta-1 in a latent state; each latency-associated peptide (LAP) monomer interacts with TGF-beta-1 in the other monomer. Interacts with LTBP1; leading to regulation of TGF-beta-1 activation. Interacts with LRRC32/GARP; leading to regulation of TGF-beta-1 activation on the surface of activated regulatory T-cells (Tregs). Interacts with LRRC33/NRROS; leading to regulation of TGF-beta-1 activation in macrophages and microglia. Interacts (via cell attachment site) with integrins ITGAV and ITGB6 (ITGAV:ITGB6), leading to release of the active TGF-beta-1. Interacts with NREP; the interaction results in a decrease in TGFB1 autoinduction. Interacts with HSP90AB1; inhibits latent TGFB1 activation. In terms of assembly, homodimer; disulfide-linked. Interacts with TGF-beta receptors (TGFBR1 and TGFBR2), leading to signal transduction. In terms of processing, transforming growth factor beta-1 proprotein: The precursor proprotein is cleaved in the Golgi apparatus by FURIN to form Transforming growth factor beta-1 (TGF-beta-1) and Latency-associated peptide (LAP) chains, which remain non-covalently linked, rendering TGF-beta-1 inactive. Post-translationally, N-glycosylated. Deglycosylation leads to activation of Transforming growth factor beta-1 (TGF-beta-1); mechanisms triggering deglycosylation-driven activation of TGF-beta-1 are however unclear.

The protein resides in the secreted. It is found in the extracellular space. It localises to the extracellular matrix. In terms of biological role, transforming growth factor beta-1 proprotein: Precursor of the Latency-associated peptide (LAP) and Transforming growth factor beta-1 (TGF-beta-1) chains, which constitute the regulatory and active subunit of TGF-beta-1, respectively. Required to maintain the Transforming growth factor beta-1 (TGF-beta-1) chain in a latent state during storage in extracellular matrix. Associates non-covalently with TGF-beta-1 and regulates its activation via interaction with 'milieu molecules', such as LTBP1, LRRC32/GARP and LRRC33/NRROS, that control activation of TGF-beta-1. Interaction with LRRC33/NRROS regulates activation of TGF-beta-1 in macrophages and microglia. Interaction with LRRC32/GARP controls activation of TGF-beta-1 on the surface of activated regulatory T-cells (Tregs). Interaction with integrins (ITGAV:ITGB6 or ITGAV:ITGB8) results in distortion of the Latency-associated peptide chain and subsequent release of the active TGF-beta-1. Its function is as follows. Multifunctional protein that regulates the growth and differentiation of various cell types and is involved in various processes, such as normal development, immune function, microglia function and responses to neurodegeneration. Activation into mature form follows different steps: following cleavage of the proprotein in the Golgi apparatus, Latency-associated peptide (LAP) and Transforming growth factor beta-1 (TGF-beta-1) chains remain non-covalently linked rendering TGF-beta-1 inactive during storage in extracellular matrix. At the same time, LAP chain interacts with 'milieu molecules', such as LTBP1, LRRC32/GARP and LRRC33/NRROS that control activation of TGF-beta-1 and maintain it in a latent state during storage in extracellular milieus. TGF-beta-1 is released from LAP by integrins (ITGAV:ITGB6 or ITGAV:ITGB8): integrin-binding to LAP stabilizes an alternative conformation of the LAP bowtie tail and results in distortion of the LAP chain and subsequent release of the active TGF-beta-1. Once activated following release of LAP, TGF-beta-1 acts by binding to TGF-beta receptors (TGFBR1 and TGFBR2), which transduce signal. While expressed by many cells types, TGF-beta-1 only has a very localized range of action within cell environment thanks to fine regulation of its activation by Latency-associated peptide chain (LAP) and 'milieu molecules'. Plays an important role in bone remodeling: acts as a potent stimulator of osteoblastic bone formation, causing chemotaxis, proliferation and differentiation in committed osteoblasts. Can promote either T-helper 17 cells (Th17) or regulatory T-cells (Treg) lineage differentiation in a concentration-dependent manner. At high concentrations, leads to FOXP3-mediated suppression of RORC and down-regulation of IL-17 expression, favoring Treg cell development. At low concentrations in concert with IL-6 and IL-21, leads to expression of the IL-17 and IL-23 receptors, favoring differentiation to Th17 cells. Stimulates sustained production of collagen through the activation of CREB3L1 by regulated intramembrane proteolysis (RIP). Mediates SMAD2/3 activation by inducing its phosphorylation and subsequent translocation to the nucleus. Positively regulates odontoblastic differentiation in dental papilla cells, via promotion of IPO7-mediated translocation of phosphorylated SMAD2 to the nucleus and subsequent transcription of target genes. Can induce epithelial-to-mesenchymal transition (EMT) and cell migration in various cell types. The polypeptide is Transforming growth factor beta-1 proprotein (TGFB1) (Mustela putorius furo (European domestic ferret)).